The chain runs to 191 residues: Holliday junction branch migration complex subunit RuvA (191 aa).

The interval 1–64 is domain I; that stretch reads MIGKLTGTLL…EDAQLLYGFA (64 aa). The domain II stretch occupies residues 65 to 140; sequence TAPERQAFRA…KLGADLGASH (76 aa). The segment at 140–142 is flexible linker; the sequence is HGP. The interval 143 to 191 is domain III; that stretch reads AVSGAQADILQALLALGYNDKEAAAALKALPAQVEVSDGIKWALKALTK.

The protein belongs to the RuvA family. As to quaternary structure, homotetramer. Forms an RuvA(8)-RuvB(12)-Holliday junction (HJ) complex. HJ DNA is sandwiched between 2 RuvA tetramers; dsDNA enters through RuvA and exits via RuvB. An RuvB hexamer assembles on each DNA strand where it exits the tetramer. Each RuvB hexamer is contacted by two RuvA subunits (via domain III) on 2 adjacent RuvB subunits; this complex drives branch migration. In the full resolvosome a probable DNA-RuvA(4)-RuvB(12)-RuvC(2) complex forms which resolves the HJ.

It is found in the cytoplasm. The RuvA-RuvB-RuvC complex processes Holliday junction (HJ) DNA during genetic recombination and DNA repair, while the RuvA-RuvB complex plays an important role in the rescue of blocked DNA replication forks via replication fork reversal (RFR). RuvA specifically binds to HJ cruciform DNA, conferring on it an open structure. The RuvB hexamer acts as an ATP-dependent pump, pulling dsDNA into and through the RuvAB complex. HJ branch migration allows RuvC to scan DNA until it finds its consensus sequence, where it cleaves and resolves the cruciform DNA. This is Holliday junction branch migration complex subunit RuvA from Verminephrobacter eiseniae (strain EF01-2).